The sequence spans 193 residues: Oocyte-secreted protein 3 (193 aa).

An N-terminal signal peptide occupies residues 1–22; sequence MKDFVRLQSSFLLCTILTLSEQ. N-linked (GlcNAc...) asparagine glycans are attached at residues N64, N130, N148, N151, N165, and N178.

Belongs to the PLAC1 family.

It localises to the secreted. In Homo sapiens (Human), this protein is Oocyte-secreted protein 3.